The following is a 50-amino-acid chain: Small ribosomal subunit protein eS31 (50 aa).

Zn(2+) contacts are provided by cysteine 22, cysteine 25, cysteine 40, and cysteine 43. Residues 22-43 form a C4-type zinc finger; that stretch reads CPRCGPGVFMADHGDRWACGKC.

The protein belongs to the eukaryotic ribosomal protein eS31 family. As to quaternary structure, part of the 30S ribosomal subunit. The cofactor is Zn(2+).

This chain is Small ribosomal subunit protein eS31, found in Pyrococcus furiosus (strain ATCC 43587 / DSM 3638 / JCM 8422 / Vc1).